Consider the following 707-residue polypeptide: Serine/threonine protein kinase UL97 (707 aa).

The segment covering 1–14 (MSSALRSRARSASL) has biased composition (low complexity). Disordered regions lie at residues 1–33 (MSSA…SRAR), 113–146 (DGEK…GDGY), 176–198 (FTGG…RPLR), and 231–264 (ESQD…EADS). Positions 113-127 (DGEKEDAASDKENLR) are enriched in basic and acidic residues. The segment covering 178 to 188 (GGSDPSDSVSG) has biased composition (low complexity). ATP is bound by residues 337–345 (LGQGSFGEV) and Lys-359. The active-site Proton acceptor is Asp-456.

Belongs to the protein kinase superfamily. Tyr protein kinase family. HCMV ganciclovir subfamily. Interacts with UL83. Post-translationally, autophosphorylates on serine and threonine residues.

Its subcellular location is the virion. The enzyme catalyses L-seryl-[protein] + ATP = O-phospho-L-seryl-[protein] + ADP + H(+). It catalyses the reaction L-threonyl-[protein] + ATP = O-phospho-L-threonyl-[protein] + ADP + H(+). Serine/threonine protein kinase that plays important roles in several processes including nuclear viral egress, viral replication or regulation of host cell cycle progression. Participates in the acquisition of tegument during virion morphogenesis in the nucleus. Phosphorylates the viral nuclear egress complex (NEC) subunits UL50 and UL53. Redistributes the host nuclear lamina by phosphorylating cellular Lamins-A/C. Plays a role in viral DNA synthesis by phosphorylating the DNA polymerase processivity factor UL44. Stimulates host cell cycle to support viral DNA synthesis by phosphorylating host retinoblastoma/RB1 protein. Additional substrates have been identified including host EF1D or H2B. Also phosphorylates host SAMHD1 and thereby counteracts its antiviral effect by reducing its dNTP hydrolase activity. This is Serine/threonine protein kinase UL97 (UL97) from Human cytomegalovirus (strain AD169) (HHV-5).